The primary structure comprises 172 residues: SsrA-binding protein (172 aa).

This sequence belongs to the SmpB family.

The protein localises to the cytoplasm. Required for rescue of stalled ribosomes mediated by trans-translation. Binds to transfer-messenger RNA (tmRNA), required for stable association of tmRNA with ribosomes. tmRNA and SmpB together mimic tRNA shape, replacing the anticodon stem-loop with SmpB. tmRNA is encoded by the ssrA gene; the 2 termini fold to resemble tRNA(Ala) and it encodes a 'tag peptide', a short internal open reading frame. During trans-translation Ala-aminoacylated tmRNA acts like a tRNA, entering the A-site of stalled ribosomes, displacing the stalled mRNA. The ribosome then switches to translate the ORF on the tmRNA; the nascent peptide is terminated with the 'tag peptide' encoded by the tmRNA and targeted for degradation. The ribosome is freed to recommence translation, which seems to be the essential function of trans-translation. The polypeptide is SsrA-binding protein (Dehalococcoides mccartyi (strain CBDB1)).